A 767-amino-acid polypeptide reads, in one-letter code: Glucoamylase S1 (767 aa).

An N-terminal signal peptide occupies residues 1 to 21 (MQRPFLLAYLVLSLLFNSALG). 2 disordered regions span residues 29–83 (RGSS…ETTI) and 125–149 (TTTV…PTTP). The segment covering 30 to 48 (GSSSSNITSSGPSSTPFSS) has biased composition (low complexity). Asn-35 carries N-linked (GlcNAc...) asparagine glycosylation. The segment covering 49–66 (ATESFSTGTTVTPSSSKY) has biased composition (polar residues). Low complexity-rich tracts occupy residues 71–83 (TETS…ETTI) and 131–149 (STSP…PTTP). N-linked (GlcNAc...) asparagine glycosylation is found at Asn-308, Asn-322, Asn-414, Asn-423, and Asn-434. Residues 348-691 (VSIERIFENI…ASTTLYQLIY (344 aa)) form a h subunit region. Residue Trp-455 participates in substrate binding. N-linked (GlcNAc...) asparagine glycosylation is present at Asn-513. Asp-518 (proton acceptor) is an active-site residue. The Proton donor role is filled by Glu-521. N-linked (GlcNAc...) asparagine glycosylation is found at Asn-546, Asn-645, Asn-650, Asn-720, and Asn-741. Positions 692–767 (RHISEQHDLV…LKATWEQTGN (76 aa)) are y subunit.

It belongs to the glycosyl hydrolase 15 family.

The enzyme catalyses Hydrolysis of terminal (1-&gt;4)-linked alpha-D-glucose residues successively from non-reducing ends of the chains with release of beta-D-glucose.. In Saccharomyces cerevisiae (Baker's yeast), this protein is Glucoamylase S1 (STA1).